The primary structure comprises 500 residues: Protein farnesyltransferase subunit beta (500 aa).

Positions 117-140 (LQNDDNNGNNNNRENNQNGGGFGG) are disordered. Residues 119–133 (NDDNNGNNNNRENNQ) show a composition bias toward low complexity. PFTB repeat units follow at residues 121 to 162 (DNNG…YVIG), 172 to 213 (REAM…SMLN), 220 to 261 (ERGV…SILN), 268 to 309 (MNSL…IIIQ), and 343 to 384 (QEYV…SLSQ). (2E,6E)-farnesyl diphosphate is bound by residues 246–249 (HGGY) and 288–291 (RTNK). Zn(2+) is bound by residues D294 and C296. Position 297–300 (297–300 (YSYW)) interacts with (2E,6E)-farnesyl diphosphate. H372 provides a ligand contact to Zn(2+). The segment at 402-451 (FEQPSPPINKKSTNVFTISNNNNNNNNKNNNSDDNNNNSNNNNNNSENQL) is disordered. Residues 420 to 449 (SNNNNNNNNKNNNSDDNNNNSNNNNNNSEN) show a composition bias toward low complexity.

The protein belongs to the protein prenyltransferase subunit beta family. Heterodimer of fntA and fntB (farnesyltransferase). Heterodimer of an alpha and a beta subunit. Zn(2+) serves as cofactor.

The enzyme catalyses L-cysteinyl-[protein] + (2E,6E)-farnesyl diphosphate = S-(2E,6E)-farnesyl-L-cysteinyl-[protein] + diphosphate. Functionally, catalyzes the transfer of a farnesyl moiety from farnesyl diphosphate to a cysteine at the fourth position from the C-terminus of several proteins. The beta subunit is responsible for peptide-binding. This chain is Protein farnesyltransferase subunit beta (fntB), found in Dictyostelium discoideum (Social amoeba).